The chain runs to 62 residues: Large ribosomal subunit protein uL29 (62 aa).

The protein belongs to the universal ribosomal protein uL29 family.

The polypeptide is Large ribosomal subunit protein uL29 (Desulfatibacillum aliphaticivorans).